The sequence spans 502 residues: Lysine--tRNA ligase (502 aa).

The interval 1–22 (MSDHEQAQAQSQDENQIMAERR) is disordered. Mg(2+) contacts are provided by E413 and E420.

Belongs to the class-II aminoacyl-tRNA synthetase family. In terms of assembly, homodimer. Mg(2+) is required as a cofactor.

The protein localises to the cytoplasm. It carries out the reaction tRNA(Lys) + L-lysine + ATP = L-lysyl-tRNA(Lys) + AMP + diphosphate. The protein is Lysine--tRNA ligase of Chromobacterium violaceum (strain ATCC 12472 / DSM 30191 / JCM 1249 / CCUG 213 / NBRC 12614 / NCIMB 9131 / NCTC 9757 / MK).